The chain runs to 140 residues: Lysozyme c-1 (140 aa).

The N-terminal stretch at 1–20 (MKVFSTVLLAIVACCAVAEA) is a signal peptide. A C-type lysozyme domain is found at 21–140 (KTFGKCELAK…KKLPNVSSCF (120 aa)). 4 disulfide bridges follow: Cys-26-Cys-139, Cys-47-Cys-128, Cys-81-Cys-94, and Cys-90-Cys-108. Catalysis depends on residues Glu-52 and Asp-69.

The protein belongs to the glycosyl hydrolase 22 family. Expressed in salivary glands and Malpighian tubules.

It catalyses the reaction Hydrolysis of (1-&gt;4)-beta-linkages between N-acetylmuramic acid and N-acetyl-D-glucosamine residues in a peptidoglycan and between N-acetyl-D-glucosamine residues in chitodextrins.. Its function is as follows. Lysozymes have primarily a bacteriolytic function; those in tissues and body fluids are associated with the monocyte-macrophage system and enhance the activity of immunoagents. The sequence is that of Lysozyme c-1 from Anopheles gambiae (African malaria mosquito).